The following is a 251-amino-acid chain: Hydroxyacylglutathione hydrolase (251 aa).

Zn(2+) is bound by residues H53, H55, D57, H58, H110, D127, and H165.

The protein belongs to the metallo-beta-lactamase superfamily. Glyoxalase II family. As to quaternary structure, monomer. Zn(2+) is required as a cofactor.

The enzyme catalyses an S-(2-hydroxyacyl)glutathione + H2O = a 2-hydroxy carboxylate + glutathione + H(+). The protein operates within secondary metabolite metabolism; methylglyoxal degradation; (R)-lactate from methylglyoxal: step 2/2. Its function is as follows. Thiolesterase that catalyzes the hydrolysis of S-D-lactoyl-glutathione to form glutathione and D-lactic acid. In Escherichia coli (strain 55989 / EAEC), this protein is Hydroxyacylglutathione hydrolase.